Here is a 247-residue protein sequence, read N- to C-terminus: NCT transcriptional regulatory complex subunit A (247 aa).

A compositionally biased stretch (basic and acidic residues) spans 1–12; it reads MTDQDSTYRPRS. Disordered regions lie at residues 1 to 31, 48 to 82, and 212 to 247; these read MTDQ…SPIY, FFAP…SPDM, and VPDQ…DDSD. Residues 13–22 are compositionally biased toward polar residues; sequence PDLSTFQSSI.

It belongs to the NC2 alpha/DRAP1 family. As to quaternary structure, forms the NCT transcriptional regulatory complex with nctB and mot1.

It is found in the nucleus. In terms of biological role, part of the NCT transcriptional regulatory complex that acts as a key regulator of ergosterol biosynthesis and the azole exporter cdr1B. The NCT complex binds the promoters of genes linked to azole susceptibility, and especially represses the expression of cdr1B transporter. The protein is NCT transcriptional regulatory complex subunit A of Aspergillus fumigatus (strain CBS 144.89 / FGSC A1163 / CEA10) (Neosartorya fumigata).